Consider the following 170-residue polypeptide: Large ribosomal subunit protein uL6m (170 aa).

The protein belongs to the universal ribosomal protein uL6 family.

The protein resides in the mitochondrion. In Dictyostelium discoideum (Social amoeba), this protein is Large ribosomal subunit protein uL6m (mrpl6).